A 1226-amino-acid chain; its full sequence is uncharacterized protein (1226 aa).

The protein belongs to the Mg-chelatase subunit H family.

This is an uncharacterized protein from Methanocaldococcus jannaschii (strain ATCC 43067 / DSM 2661 / JAL-1 / JCM 10045 / NBRC 100440) (Methanococcus jannaschii).